The chain runs to 624 residues: Outer dynein arm-docking complex subunit 4 (624 aa).

TPR repeat units follow at residues 11–44 (FPSY…QSGD), 46–78 (NCLV…DPTF), 79–112 (CKGI…RPDR), 273–309 (LKSL…NQEE), 318–351 (GNLY…AKEH), 358–391 (SRAL…AKTT), 395–428 (TWLF…AEEE), and 435–468 (LNAS…AKLV). The disordered stretch occupies residues 511 to 624 (MSQMDLQGAS…VQKLEKTKEE (114 aa)). Basic and acidic residues-rich tracts occupy residues 520 to 557 (SEKE…DRKS), 576 to 588 (IRRE…RRLS), and 595 to 624 (PSED…TKEE).

Component of the outer dynein arm-docking complex along with ODAD1, ODAD2, and ODAD3. Interacts with ODAD1; this interaction may facilitate the recruitment and/or attachment of outer dynein arm docking complex proteins, including ODAD1, ODAD3 and ODAD2, to ciliary axonemes. Interacts with components of the IFT complex A, including IFT140, TTC21B/IFT139 and WDR19/IFT144, and the IFT complex B, including IFT46, IFT52 and IFT57. Interacts with CFAP53.

Its subcellular location is the cell projection. The protein localises to the cilium. It localises to the cytoplasm. It is found in the cytoskeleton. The protein resides in the cilium axoneme. Its function is as follows. Component of the outer dynein arm-docking complex (ODA-DC) that mediates outer dynein arms (ODA) binding onto the doublet microtubule. Plays an essential role for the assembly of ODA-DC and for the docking of ODA in ciliary axoneme. This is Outer dynein arm-docking complex subunit 4 (Odad4) from Mus musculus (Mouse).